A 668-amino-acid chain; its full sequence is Methionine--tRNA ligase (668 aa).

The 'HIGH' region signature appears at 11 to 21 (AYTNGPLHIGH). 4 residues coordinate Zn(2+): Cys-146, Cys-149, Cys-159, and Cys-162. A 'KMSKS' region motif is present at residues 332 to 336 (KMSTS). Thr-335 is a binding site for ATP. Residues 567–668 (EFNRLDLRVG…REVEPGERIR (102 aa)) form the tRNA-binding domain.

It belongs to the class-I aminoacyl-tRNA synthetase family. MetG type 1 subfamily. As to quaternary structure, homodimer. Requires Zn(2+) as cofactor.

The protein resides in the cytoplasm. It catalyses the reaction tRNA(Met) + L-methionine + ATP = L-methionyl-tRNA(Met) + AMP + diphosphate. Functionally, is required not only for elongation of protein synthesis but also for the initiation of all mRNA translation through initiator tRNA(fMet) aminoacylation. In Methanopyrus kandleri (strain AV19 / DSM 6324 / JCM 9639 / NBRC 100938), this protein is Methionine--tRNA ligase.